A 126-amino-acid polypeptide reads, in one-letter code: Small ribosomal subunit protein bS6 (126 aa).

Residues 104-126 (QGAEKGKSSSKKVAAEAEASEEA) are disordered.

Belongs to the bacterial ribosomal protein bS6 family.

Binds together with bS18 to 16S ribosomal RNA. This Coxiella burnetii (strain Dugway 5J108-111) protein is Small ribosomal subunit protein bS6.